The following is a 218-amino-acid chain: Small ribosomal subunit protein uS4 (218 aa).

The S4 RNA-binding domain occupies 111 to 175 (RRLQTQVLRL…SPLKNESHPE (65 aa)). The segment at 192–218 (KAAAEAKQAREKPPERGGGRRKRGGRR) is disordered. Positions 198–209 (KQAREKPPERGG) are enriched in basic and acidic residues.

The protein belongs to the universal ribosomal protein uS4 family. Part of the 30S ribosomal subunit. Contacts protein S5. The interaction surface between S4 and S5 is involved in control of translational fidelity.

Its function is as follows. One of the primary rRNA binding proteins, it binds directly to 16S rRNA where it nucleates assembly of the body of the 30S subunit. Functionally, with S5 and S12 plays an important role in translational accuracy. In Methanosarcina acetivorans (strain ATCC 35395 / DSM 2834 / JCM 12185 / C2A), this protein is Small ribosomal subunit protein uS4.